A 276-amino-acid polypeptide reads, in one-letter code: Large ribosomal subunit protein uL2 (276 aa).

Residues methionine 225–lysine 276 form a disordered region. Residues lysine 258–lysine 276 show a composition bias toward basic residues.

Belongs to the universal ribosomal protein uL2 family. Part of the 50S ribosomal subunit. Forms a bridge to the 30S subunit in the 70S ribosome.

Functionally, one of the primary rRNA binding proteins. Required for association of the 30S and 50S subunits to form the 70S ribosome, for tRNA binding and peptide bond formation. It has been suggested to have peptidyltransferase activity; this is somewhat controversial. Makes several contacts with the 16S rRNA in the 70S ribosome. The sequence is that of Large ribosomal subunit protein uL2 from Moorella thermoacetica (strain ATCC 39073 / JCM 9320).